Consider the following 110-residue polypeptide: uncharacterized protein (110 aa).

Disordered regions lie at residues 1-41 (MEWG…ERAQ) and 65-110 (LRQL…ASES). Residues 38–68 (ERAQQLLDAVEQRQRQLLDTIAACEEMLRQL) adopt a coiled-coil conformation.

This is an uncharacterized protein from Mus musculus (Mouse).